The primary structure comprises 1292 residues: Putative late blight resistance protein homolog R1C-3 (1292 aa).

Coiled coils occupy residues 394–414 (DSLAFLKNQLQVIQTKFESMQ) and 505–526 (RMNEEIVGFEDVIETLRKKLLN). The region spanning 505 to 792 (RMNEEIVGFE…SESFVKSCEG (288 aa)) is the NB-ARC domain. 538-545 (GMPGLGKT) contributes to the ATP binding site. LRR repeat units follow at residues 842–865 (AEENFLLWINRDQITKPSSCVYSH), 920–944 (FKFLKVLDLEHQVVIDSIPTELFYL), 963–991 (LWNLETLILNRTSAATGKTLLLPSTVWDM), 1066–1089 (PIRLEMLKLHQSNIFNPISFCISA), 1094–1113 (YLELSGFYLDSQYLSETADH), 1114–1142 (LKHLEVLKLYYVEFGDHREWKVSNGMFPQ), and 1163–1187 (FPNLEQLVLRGCRHLMEIPSCFMDI). Positions 1211–1278 (ETQVEDNQNT…KLRNVAYADE (68 aa)) constitute an HMA domain.

Belongs to the disease resistance NB-LRR family.

It localises to the cytoplasm. The protein resides in the membrane. In terms of biological role, confers resistance to late blight (Phytophthora infestans) races carrying the avirulence gene Avr1. Resistance proteins guard the plant against pathogens that contain an appropriate avirulence protein via an indirect interaction with this avirulence protein. That triggers a defense system including the hypersensitive response, which restricts the pathogen growth. The sequence is that of Putative late blight resistance protein homolog R1C-3 (R1C-3) from Solanum demissum (Wild potato).